A 219-amino-acid polypeptide reads, in one-letter code: Proteasome subunit beta (219 aa).

A propeptide spans 1–14 (removed in mature form; by autocatalysis); that stretch reads MISGSEYHKEYMKG. Residue Thr-15 is the Nucleophile of the active site.

Belongs to the peptidase T1B family. In terms of assembly, the 20S proteasome core is composed of 14 alpha and 14 beta subunits that assemble into four stacked heptameric rings, resulting in a barrel-shaped structure. The two inner rings, each composed of seven catalytic beta subunits, are sandwiched by two outer rings, each composed of seven alpha subunits. The catalytic chamber with the active sites is on the inside of the barrel. Has a gated structure, the ends of the cylinder being occluded by the N-termini of the alpha-subunits. Is capped at one or both ends by the proteasome regulatory ATPase, PAN.

It is found in the cytoplasm. It catalyses the reaction Cleavage of peptide bonds with very broad specificity.. With respect to regulation, the formation of the proteasomal ATPase PAN-20S proteasome complex, via the docking of the C-termini of PAN into the intersubunit pockets in the alpha-rings, triggers opening of the gate for substrate entry. Interconversion between the open-gate and close-gate conformations leads to a dynamic regulation of the 20S proteasome proteolysis activity. In terms of biological role, component of the proteasome core, a large protease complex with broad specificity involved in protein degradation. This Methanococcus vannielii (strain ATCC 35089 / DSM 1224 / JCM 13029 / OCM 148 / SB) protein is Proteasome subunit beta.